Here is a 358-residue protein sequence, read N- to C-terminus: MAMRGVDFKWYDGFFLSMLATSVIIVAVNWNRYRACEYPLHIWIVVDYTTVFIFRVFMFVDNGLASGLGLDFGSQQRNAMFCGRVVVLSVLSLLLYPFLWAWTVIGTQWFTKSKTCLPEEGQKWGFLIWLMFSYCGLLCIAFICVGKWLTRRQVHLLRAQQGIPISEFGILVDMIRVPDWAFEAAGQEMRGISQDAATYHPGLYLTPAQTEAVEALIQELPKFRLKAVPDDCGECLICLEEFHIGHEVRGLPCAHNFHVECIDQWLRLNVKCPRCRCSVFPDLDLSALSNLQSSGTEQHSQVNTETSEARYIRSQPQSESYFLRVQSLIHPVHTDTALETAENGGVPPVLTDLSPSRR.

Positions 1–27 (MAMRGVDFKWYDGFFLSMLATSVIIVA) are cleaved as a signal peptide. The next 3 helical transmembrane spans lie at 40–60 (LHIW…FMFV), 85–105 (VVVL…WTVI), and 125–145 (GFLI…FICV). The RING-type; atypical zinc-finger motif lies at 235 to 276 (CLICLEEFHIGHEVRGLPCAHNFHVECIDQWLRLNVKCPRCR). Residues 336-358 (TALETAENGGVPPVLTDLSPSRR) are disordered.

As to expression, expressed in roots, stems, leaves, flowers and siliques.

It localises to the membrane. It catalyses the reaction S-ubiquitinyl-[E2 ubiquitin-conjugating enzyme]-L-cysteine + [acceptor protein]-L-lysine = [E2 ubiquitin-conjugating enzyme]-L-cysteine + N(6)-ubiquitinyl-[acceptor protein]-L-lysine.. Its pathway is protein modification; protein ubiquitination. Its function is as follows. E3 ubiquitin protein ligase that acts as a positive regulator of sugar signaling during early seedling development. Possesses E3 ligase activity in vitro. The protein is E3 ubiquitin-protein ligase SIS3 (SIS3) of Arabidopsis thaliana (Mouse-ear cress).